The chain runs to 607 residues: MPKSPHKLFKANSFWKENNLILREIKHFRKIAILAVIFSFLAASFEGVSIGFLLSFLQKLTSPNDPIQTGISWVDMILAADAWPIPPIYRISLLILLSTWMRATFNYFGGVYTESAQLNLADRLHKQIFEQLQALRLSYFAQTRSGELINTITTEIERIKQGFSGLAFVLTRIMTVCVYFVVMFSISWQLSIISVLIFLLLAVGLSTLNKRVRETSFGISHANAQFTAVAVEFINGIRTIQAFGTQEFERQRFYKASTNQLNAAIKVVLAWTLVKPIAEGIATTVLISLIVISFATFTLPVASLLTFFFVLVRVIPNIQDINGTVAFLSTLQGSSENIKNILQTNNKPYLKNGKLHFQGLKRSIDLVSVDFGYTADNLVLNNITLTIERGKTTALVGASGAGKTTLADLIPRFYDPTEGQILVDGLDVQYFEINSLRRKMAVVSQDTFIFNTSIRDNIAYGTSGASEAEIREVARLANALQFIEEMPEGFDTKLGDRGVRLSGGQRQRIAIARALLRDPEILILDEATSALDSVSERLIQESIEKLSVGRTVIAIAHRLSTIAKADKVVVMEQGRIVEQGNYQELLEQRGKLWKYHQMQHESGQTNS.

The region spanning 32–330 (AILAVIFSFL…INGTVAFLST (299 aa)) is the ABC transmembrane type-1 domain. A run of 5 helical transmembrane segments spans residues 33–53 (ILAV…IGFL), 77–97 (ILAA…LILL), 163–182 (FSGL…YFVV), 186–208 (ISWQ…LSTL), and 290–310 (IVIS…FFFV). Residues 364-598 (IDLVSVDFGY…RGKLWKYHQM (235 aa)) form the ABC transporter domain. 397–404 (GASGAGKT) contributes to the ATP binding site.

Belongs to the ABC transporter superfamily.

Its subcellular location is the cell inner membrane. Functionally, acts early in the process of morphological differentiation of heterocysts. This is Heterocyst differentiation ATP-binding protein HepA (hepA) from Nostoc sp. (strain PCC 7120 / SAG 25.82 / UTEX 2576).